A 262-amino-acid chain; its full sequence is Ribosome biogenesis GTPase A (262 aa).

One can recognise a CP-type G domain in the interval 12-157 (KRQIKDLLRL…ILDTPGILYK (146 aa)). GTP contacts are provided by residues 54–57 (NKVD), 109–114 (NTGKST), and G153.

This sequence belongs to the TRAFAC class YlqF/YawG GTPase family. MTG1 subfamily.

The protein resides in the cytoplasm. Required for a late step of 50S ribosomal subunit assembly. Has GTPase activity. Binds to the 23S rRNA. The chain is Ribosome biogenesis GTPase A from Thermotoga maritima (strain ATCC 43589 / DSM 3109 / JCM 10099 / NBRC 100826 / MSB8).